The chain runs to 415 residues: Diaminopimelate decarboxylase (415 aa).

At Lys-54 the chain carries N6-(pyridoxal phosphate)lysine. Residues Gly-223 and 264–267 each bind pyridoxal 5'-phosphate; that span reads EPGR. Substrate is bound by residues Arg-267, Arg-303, and Tyr-307. Catalysis depends on Cys-338, which acts as the Proton donor. 2 residues coordinate substrate: Glu-339 and Tyr-374. Tyr-374 provides a ligand contact to pyridoxal 5'-phosphate.

The protein belongs to the Orn/Lys/Arg decarboxylase class-II family. LysA subfamily. As to quaternary structure, homodimer. Requires pyridoxal 5'-phosphate as cofactor.

The catalysed reaction is meso-2,6-diaminopimelate + H(+) = L-lysine + CO2. It functions in the pathway amino-acid biosynthesis; L-lysine biosynthesis via DAP pathway; L-lysine from DL-2,6-diaminopimelate: step 1/1. Specifically catalyzes the decarboxylation of meso-diaminopimelate (meso-DAP) to L-lysine. This Buchnera aphidicola subsp. Schizaphis graminum (strain Sg) protein is Diaminopimelate decarboxylase.